We begin with the raw amino-acid sequence, 275 residues long: NH(3)-dependent NAD(+) synthetase (275 aa).

Gly46–Ser53 contributes to the ATP binding site. Position 52 (Asp52) interacts with Mg(2+). Arg140 contacts deamido-NAD(+). Thr160 contacts ATP. Glu165 is a binding site for Mg(2+). Deamido-NAD(+) contacts are provided by Lys173 and Asp180. 2 residues coordinate ATP: Lys189 and Thr211. His260–Lys261 is a deamido-NAD(+) binding site.

The protein belongs to the NAD synthetase family. Homodimer.

It carries out the reaction deamido-NAD(+) + NH4(+) + ATP = AMP + diphosphate + NAD(+) + H(+). It participates in cofactor biosynthesis; NAD(+) biosynthesis; NAD(+) from deamido-NAD(+) (ammonia route): step 1/1. Its function is as follows. Catalyzes the ATP-dependent amidation of deamido-NAD to form NAD. Uses ammonia as a nitrogen source. In Escherichia coli O7:K1 (strain IAI39 / ExPEC), this protein is NH(3)-dependent NAD(+) synthetase.